The primary structure comprises 117 residues: UPF0125 protein VV0820 (117 aa).

Residues 90-117 are disordered; that stretch reads RKRAEQAKESGAADPVTGGKPSPLRKAD.

It belongs to the UPF0125 (RnfH) family.

The chain is UPF0125 protein VV0820 from Vibrio vulnificus (strain YJ016).